We begin with the raw amino-acid sequence, 102 residues long: Large ribosomal subunit protein uL24 (102 aa).

Belongs to the universal ribosomal protein uL24 family. As to quaternary structure, part of the 50S ribosomal subunit.

One of two assembly initiator proteins, it binds directly to the 5'-end of the 23S rRNA, where it nucleates assembly of the 50S subunit. Its function is as follows. One of the proteins that surrounds the polypeptide exit tunnel on the outside of the subunit. This chain is Large ribosomal subunit protein uL24, found in Burkholderia ambifaria (strain ATCC BAA-244 / DSM 16087 / CCUG 44356 / LMG 19182 / AMMD) (Burkholderia cepacia (strain AMMD)).